The sequence spans 300 residues: Bifunctional protein FolD (300 aa).

NADP(+) is bound by residues 172–174 (GRS), serine 206, and isoleucine 247.

It belongs to the tetrahydrofolate dehydrogenase/cyclohydrolase family. In terms of assembly, homodimer.

The enzyme catalyses (6R)-5,10-methylene-5,6,7,8-tetrahydrofolate + NADP(+) = (6R)-5,10-methenyltetrahydrofolate + NADPH. It carries out the reaction (6R)-5,10-methenyltetrahydrofolate + H2O = (6R)-10-formyltetrahydrofolate + H(+). Its pathway is one-carbon metabolism; tetrahydrofolate interconversion. Functionally, catalyzes the oxidation of 5,10-methylenetetrahydrofolate to 5,10-methenyltetrahydrofolate and then the hydrolysis of 5,10-methenyltetrahydrofolate to 10-formyltetrahydrofolate. The chain is Bifunctional protein FolD from Rhodopirellula baltica (strain DSM 10527 / NCIMB 13988 / SH1).